Reading from the N-terminus, the 345-residue chain is Mannonate dehydratase 2 (345 aa).

It belongs to the mannonate dehydratase family. The cofactor is Fe(2+). Requires Mn(2+) as cofactor.

The enzyme catalyses D-mannonate = 2-dehydro-3-deoxy-D-gluconate + H2O. Its pathway is carbohydrate metabolism; pentose and glucuronate interconversion. Its function is as follows. Catalyzes the dehydration of D-mannonate. The protein is Mannonate dehydratase 2 (uxuA2) of Halalkalibacterium halodurans (strain ATCC BAA-125 / DSM 18197 / FERM 7344 / JCM 9153 / C-125) (Bacillus halodurans).